A 692-amino-acid chain; its full sequence is Sodium- and chloride-dependent glycine transporter 1 (692 aa).

The interval 1-34 is disordered; the sequence is MIGGDTRAASAHPGMASAQGPVATPSPEQPFPGT. The Cytoplasmic segment spans residues 1-94; sequence MIGGDTRAAS…TRGNWGNQIE (94 aa). 3 consecutive transmembrane segments (helical) span residues 95–115, 122–142, and 174–194; these read FVLTSVGYAVGLGNVWRFPYL, GAFMFPYFIMLIFCGIPLFFM, and VSTYIGIYYNVVICIAFYYFF. Residues 195-271 lie on the Extracellular side of the membrane; the sequence is SSMTHVLPWA…LSDDIGNFGE (77 aa). Helical transmembrane passes span 272–292, 301–321, 346–366, 393–413, 436–456, 492–512, 516–536, 556–576, and 596–616; these read VRLPLLGCLGVSWVVVFLCLI, VVYFTATFPYVVLTILFVRGV, VWGDAASQIFYSLGCAWGGLI, SVYAGFVIFSILGFMANHLGV, LLPISPLWSLLFFFMLILLGL, VAGFLLGIPLTSQAGIYWLLL, YAASFSLVVISCIMCVSIMYI, LFFQICWRFVSPAIIFFILIF, and VAIGFLMALSSVICIPLYALF. Residues 617-692 lie on the Cytoplasmic side of the membrane; the sequence is QLCRTDGDTL…GSSRFQDSRI (76 aa). Residue Thr-657 is modified to Phosphothreonine. A phosphoserine mark is found at Ser-659 and Ser-684. The essential for interaction with EXOC1 stretch occupies residues 681–692; the sequence is SNGSSRFQDSRI.

It belongs to the sodium:neurotransmitter symporter (SNF) (TC 2.A.22) family. SLC6A9 subfamily. In terms of assembly, interacts with EXOC1; interaction increases the transporter capacity of SLC6A9 probably by promoting its insertion into the cell membrane. Interacts with EXOC3 and EXOC4. Expressed in the brain (at protein level). At 11 dpc, expressed in the ventral part of the ventricular zone. At 15 dpc, also expressed in adjacent mantle tissue and the meninges. Strongly expressed in 12 dpc and 15 dpc liver. As to expression, expressed in the brain.

Its subcellular location is the cell membrane. The enzyme catalyses glycine(out) + chloride(out) + 2 Na(+)(out) = glycine(in) + chloride(in) + 2 Na(+)(in). Its function is as follows. Sodium- and chloride-dependent glycine transporter which is essential for regulating glycine concentrations at inhibitory glycinergic synapses. Sodium- and chloride-dependent glycine transporter. This Mus musculus (Mouse) protein is Sodium- and chloride-dependent glycine transporter 1 (Slc6a9).